Here is a 630-residue protein sequence, read N- to C-terminus: A-type voltage-gated potassium channel KCND2 (630 aa).

Residues 1–184 lie on the Cytoplasmic side of the membrane; it reads MAAGVAAWLP…FENPHTSTMA (184 aa). An interaction with KCNIP1, KCNIP2, and other family members region spans residues 2-20; that stretch reads AAGVAAWLPFARAAAIGWM. At Thr-38 the chain carries Phosphothreonine. Positions 71–90 are interaction with KCNIP1; that stretch reads ERDFFYHPETQQYFFDRDPD. Zn(2+) contacts are provided by His-105, Cys-111, Cys-132, and Cys-133. Residues 185–206 traverse the membrane as a helical segment; it reads LVFYYVTGFFIAVSVIANVVET. At 207–226 the chain is on the extracellular side; the sequence is VPCGSSPGHIKELPCGERYA. Residues 227-249 form a helical membrane-spanning segment; that stretch reads VAFFCLDTACVMIFTVEYLLRLA. Topologically, residues 250-256 are cytoplasmic; it reads AAPSRYR. A helical transmembrane segment spans residues 257–281; it reads FVRSVMSIIDVVAILPYYIGLVMTD. At 282–287 the chain is on the extracellular side; sequence NEDVSG. Residues 288-307 traverse the membrane as a helical; Voltage-sensor segment; it reads AFVTLRVFRVFRIFKFSRHS. Residues 308 to 321 lie on the Cytoplasmic side of the membrane; that stretch reads QGLRILGYTLKSCA. The tract at residues 308–321 is S4-S5 linker; sequence QGLRILGYTLKSCA. The helical transmembrane segment at 322–345 threads the bilayer; it reads SELGFLLFSLTMAIIIFATVMFYA. Residues 346–357 lie on the Extracellular side of the membrane; it reads EKGSSASKFTSI. Positions 358–369 form an intramembrane region, helical; the sequence is PAAFWYTIVTMT. Residues Thr-370, Leu-371, Gly-372, and Tyr-373 each contribute to the K(+) site. The Selectivity filter signature appears at 370-375; it reads TLGYGD. An intramembrane segment occupies 370–377; it reads TLGYGDMV. Topologically, residues 378–380 are extracellular; that stretch reads PKT. Residues 381–403 form a helical membrane-spanning segment; sequence IAGKIFGSICSLSGVLVIALPVP. The Cytoplasmic portion of the chain corresponds to 404–630; sequence VIVSNFSRIY…GGNIVRVSAL (227 aa). Ser-438 carries the phosphoserine modification. Residues 474 to 489 are required for dendritic targeting; it reads FETQHHHLLHCLEKTT. The important for normal channel activation and inactivation, for interaction with KCNIP2, and probably other family members as well stretch occupies residues 474–630; the sequence is FETQHHHLLH…GGNIVRVSAL (157 aa). Phosphoserine is present on residues Ser-548, Ser-552, Ser-572, and Ser-575. Residues 600 to 623 are disordered; sequence IPTPPVTTPEGDDRPESPEYSGGN. 2 positions are modified to phosphothreonine: Thr-602 and Thr-607. Residue Ser-616 is modified to Phosphoserine. The PDZ-binding motif lies at 627–630; the sequence is VSAL.

The protein belongs to the potassium channel family. D (Shal) (TC 1.A.1.2) subfamily. Kv4.2/KCND2 sub-subfamily. In terms of assembly, homotetramer or heterotetramer with KCND1 or KCND3. Associates with the regulatory subunits KCNIP2, KCNIP3 and KCNIP4. Interacts with the regulatory subunit KCNIP1; this interaction mediates the capture of both the N- and C-terminus of KCND2, preventing N-type inactivation and stabilizing the S6 conformation, thereby accelerating closed state inactivation and recovery. Interacts with DPP10, DLG4 and DLG1. In vivo, probably exists as heteromeric complex containing variable proportions of KCND1, KCND2, KCND3, KCNIP1, KCNIP2, KCNIP3, KCNIP4, DPP6 and DPP10. The tetrameric channel can associate with up to four regulatory subunits, such as KCNIP2 or KCNIP4. Interaction with KCNIP3 promotes tetramerization and formation of a functional potassium channel. Interaction with four KCNIP4 chains does not reduce interaction with DPP10. Probably part of a complex consisting of KCNIP1, KCNIP2 isoform 3 and KCND2. Interacts with FLNA and FLNC. Interacts with NCS1/FREQ. Identified in a complex with cAMP-dependent protein kinase (PKA), CAV3, AKAP6 and KCND3 in cardiac myocytes. Interacts (via S1 and S2 helices) with DPP6; this interaction stabilizes the conformation of the S1-S2 helices and facilitates S4 conformational change, including S4 sliding up and down, thereby accelerating activation, inactivation, and recovery. In terms of processing, phosphorylation at Ser-438 in response to MAPK activation is increased in stimulated dendrites. Interaction with KCNIP2 and DPP6 propomtes phosphorylation by PKA at Ser-552. Phosphorylation at Ser-552 has no effect on interaction with KCNIP3, but is required for the regulation of channel activity by KCNIP3. Phosphorylation at Ser-552 leads to KCND2 internalization. Phosphorylated by MAPK in response to signaling via the metabotropic glutamate receptor GRM5. Phosphorylation at Ser-616 is required for the down-regulation of neuronal A-type currents in response to signaling via GRM5. Detected in brain cortex, hippocampus, dentate gyrus, thalamus and cerebellum. Detected in neurons from the primary visual cortex. Detected in the supraoptic nucleus in hypothalamus, in hippocampus and the habenular nucleus of the thalamus. Detected in the bed nucleus of the stria terminalis. Detected in dendritic fields in the hippocampus CA1 layer, in stratum radiatum, stratum oriens, stratum lacunosum-moleculare and stratum pyramidale. Detected in dendritic fields in the hippocampus CA3 layer and in dentate gyrus. Detected in the cerebellum granule cell layer, where it localizes at synapses. Detected in the main olfactory bulb, especially in the granule cell layer and the external plexiform layer, but also the mitral layer. Detected in heart atrium and ventricle. Detected in heart left ventricle (at protein level). Highly expressed in heart and throughout the brain, with similar levels in cortex and hypothalamus, and much higher levels in hippocampus, dentate gyrus and the habenular nucleus of the thalamus. Detected in brain, and at lower levels in heart atrium and ventricle. Detected in neurons from the bed nucleus of the stria terminalis. Detected in aorta, cardiac and smooth muscle.

The protein resides in the cell membrane. It localises to the cell projection. It is found in the dendrite. The protein localises to the synapse. Its subcellular location is the perikaryon. The protein resides in the postsynaptic cell membrane. It localises to the dendritic spine. It is found in the sarcolemma. The protein localises to the cell junction. Its subcellular location is the membrane. The protein resides in the caveola. The enzyme catalyses K(+)(in) = K(+)(out). Its activity is regulated as follows. Inhibited by 5 mM 4-aminopyridine (4-AP). Not inhibited by dendrotoxins and by tetraethylammonium (TEA). Inhibited by 10 mM flecainide and 20 mM quinidine. Inhibited by the heteropodatoxins HpTx(1), HpTx(2), and HpTx(3). Voltage-gated potassium channel that mediates transmembrane potassium transport in excitable membranes, primarily in the brain, but also in rodent heart. Mediates the major part of the dendritic A-type current I(SA) in brain neurons. This current is activated at membrane potentials that are below the threshold for action potentials. It regulates neuronal excitability, prolongs the latency before the first spike in a series of action potentials, regulates the frequency of repetitive action potential firing, shortens the duration of action potentials and regulates the back-propagation of action potentials from the neuronal cell body to the dendrites. Contributes to the regulation of the circadian rhythm of action potential firing in suprachiasmatic nucleus neurons, which regulates the circadian rhythm of locomotor activity. Functions downstream of the metabotropic glutamate receptor GRM5 and plays a role in neuronal excitability and in nociception mediated by activation of GRM5. Mediates the transient outward current I(to) in rodent heart left ventricle apex cells, but not in human heart, where this current is mediated by another family member. Forms tetrameric potassium-selective channels through which potassium ions pass in accordance with their electrochemical gradient. The channel alternates between opened and closed conformations in response to the voltage difference across the membrane. Can form functional homotetrameric channels and heterotetrameric channels that contain variable proportions of KCND2 and KCND3; channel properties depend on the type of pore-forming alpha subunits that are part of the channel. In vivo, membranes probably contain a mixture of heteromeric potassium channel complexes. Interaction with specific isoforms of the regulatory subunits KCNIP1, KCNIP2, KCNIP3 or KCNIP4 strongly increases expression at the cell surface and thereby increases channel activity; it modulates the kinetics of channel activation and inactivation, shifts the threshold for channel activation to more negative voltage values, shifts the threshold for inactivation to less negative voltages and accelerates recovery after inactivation. Likewise, interaction with DPP6 or DPP10 promotes expression at the cell membrane and regulates both channel characteristics and activity. Upon depolarization, the channel goes from a resting closed state (C state) to an activated but non-conducting state (C* state), from there, the channel may either inactivate (I state) or open (O state). In Rattus norvegicus (Rat), this protein is A-type voltage-gated potassium channel KCND2.